A 130-amino-acid chain; its full sequence is Tripartite terminase subunit 2 (130 aa).

The protein belongs to the herpesviridae TRM2 protein family. Associates with TRM1 and TRM3 to form the tripartite terminase complex.

It is found in the host nucleus. In terms of biological role, component of the molecular motor that translocates viral genomic DNA in empty capsid during DNA packaging. Forms a tripartite terminase complex together with TRM1 and TRM3 in the host cytoplasm. Once the complex reaches the host nucleus, it interacts with the capsid portal vertex. This portal forms a ring in which genomic DNA is translocated into the capsid. This Homo sapiens (Human) protein is Tripartite terminase subunit 2.